A 358-amino-acid polypeptide reads, in one-letter code: NADH-quinone oxidoreductase subunit H (358 aa).

The next 8 helical transmembrane spans lie at 30–50 (IVIG…MIFM), 96–116 (FLYN…FSCL), 129–149 (VGIF…LLAG), 165–185 (GAQM…IVIL), 201–221 (GWFL…YLIA), 264–284 (LFII…PLHI), 297–317 (IPGF…LMWI), and 336–356 (YLVP…VFKL).

This sequence belongs to the complex I subunit 1 family. In terms of assembly, NDH-1 is composed of 14 different subunits. Subunits NuoA, H, J, K, L, M, N constitute the membrane sector of the complex.

The protein resides in the cell inner membrane. It catalyses the reaction a quinone + NADH + 5 H(+)(in) = a quinol + NAD(+) + 4 H(+)(out). Functionally, NDH-1 shuttles electrons from NADH, via FMN and iron-sulfur (Fe-S) centers, to quinones in the respiratory chain. The immediate electron acceptor for the enzyme in this species is believed to be ubiquinone. Couples the redox reaction to proton translocation (for every two electrons transferred, four hydrogen ions are translocated across the cytoplasmic membrane), and thus conserves the redox energy in a proton gradient. This subunit may bind ubiquinone. The chain is NADH-quinone oxidoreductase subunit H from Phocaeicola vulgatus (strain ATCC 8482 / DSM 1447 / JCM 5826 / CCUG 4940 / NBRC 14291 / NCTC 11154) (Bacteroides vulgatus).